A 115-amino-acid polypeptide reads, in one-letter code: Non-specific lipid-transfer protein 3 (115 aa).

A signal peptide spans 1-23; the sequence is MAFALRFFTCLVLTVCIVASVDA. 4 disulfide bridges follow: cysteine 27/cysteine 74, cysteine 37/cysteine 51, cysteine 52/cysteine 97, and cysteine 72/cysteine 111.

Belongs to the plant LTP family.

In terms of biological role, plant non-specific lipid-transfer proteins transfer phospholipids as well as galactolipids across membranes. May play a role in wax or cutin deposition in the cell walls of expanding epidermal cells and certain secretory tissues. The polypeptide is Non-specific lipid-transfer protein 3 (LTP3) (Arabidopsis thaliana (Mouse-ear cress)).